The sequence spans 183 residues: UPF0316 protein EF_1609 (183 aa).

3 helical membrane passes run 1 to 21, 35 to 55, and 62 to 82; these read MVVDLKMLAMIFIINFAYITL, VIAPLVSMAEITIYVLGLSMV, and PLNLLVYALGYAVGISVGIKI.

It belongs to the UPF0316 family.

It localises to the cell membrane. The polypeptide is UPF0316 protein EF_1609 (Enterococcus faecalis (strain ATCC 700802 / V583)).